Reading from the N-terminus, the 417-residue chain is MMKSLANAVGAKTARACDSCVKRRARWYCAADDAFLCQSCDSLVHSANPLARRHERVRLKTASPAVVKHSNHSSASPPHEVATWHHGFTRKARTPRGSGKKNNSSIFHDLVPDISIEDQTDNYELEEQLICQVPVLDPLVSEQFLNDVVEPKIEFPMIRSGLMIEEEEDNAESCLNGFFPTDMELEEFAADVETLLGRGLDTESYAMEELGLSNSEMFKIEKDEIEEEVEEIKAMSMDIFDDDRKDVDGTVPFELSFDYESSHKTSEEEVMKNVESSGECVVKVKEEEHKNVLMLRLNYDSVISTWGGQGPPWSSGEPPERDMDISGWPAFSMVENGGESTHQKQYVGGCLPSSGFGDGGREARVSRYREKRRTRLFSKKIRYEVRKLNAEKRPRMKGRFVKRASLAAAASPLGVNY.

The Zn(2+) site is built by cysteine 17, cysteine 20, cysteine 40, and histidine 45. A B box-type; atypical zinc finger spans residues 17–59; that stretch reads CDSCVKRRARWYCAADDAFLCQSCDSLVHSANPLARRHERVRL. The tract at residues 63–105 is disordered; sequence SPAVVKHSNHSSASPPHEVATWHHGFTRKARTPRGSGKKNNSS. A coiled-coil region spans residues 212-239; the sequence is LSNSEMFKIEKDEIEEEVEEIKAMSMDI. The CCT domain occupies 361–403; sequence REARVSRYREKRRTRLFSKKIRYEVRKLNAEKRPRMKGRFVKR.

It belongs to the CONSTANS family.

The protein localises to the nucleus. The protein is Zinc finger protein CONSTANS-LIKE 16 (COL16) of Arabidopsis thaliana (Mouse-ear cress).